The chain runs to 396 residues: 8-amino-7-oxononanoate synthase (396 aa).

Position 21 (Arg-21) interacts with substrate. 112-113 (GY) contributes to the pyridoxal 5'-phosphate binding site. His-137 provides a ligand contact to substrate. Residues Ser-183, His-211, and Thr-239 each contribute to the pyridoxal 5'-phosphate site. N6-(pyridoxal phosphate)lysine is present on Lys-242. Thr-358 provides a ligand contact to substrate.

The protein belongs to the class-II pyridoxal-phosphate-dependent aminotransferase family. BioF subfamily. As to quaternary structure, homodimer. The cofactor is pyridoxal 5'-phosphate.

The catalysed reaction is 6-carboxyhexanoyl-[ACP] + L-alanine + H(+) = (8S)-8-amino-7-oxononanoate + holo-[ACP] + CO2. Its pathway is cofactor biosynthesis; biotin biosynthesis. Catalyzes the decarboxylative condensation of pimeloyl-[acyl-carrier protein] and L-alanine to produce 8-amino-7-oxononanoate (AON), [acyl-carrier protein], and carbon dioxide. The polypeptide is 8-amino-7-oxononanoate synthase (Bordetella petrii (strain ATCC BAA-461 / DSM 12804 / CCUG 43448)).